A 110-amino-acid chain; its full sequence is Small ribosomal subunit protein uS17 (110 aa).

The protein belongs to the universal ribosomal protein uS17 family. Part of the 30S ribosomal subunit.

Its function is as follows. One of the primary rRNA binding proteins, it binds specifically to the 5'-end of 16S ribosomal RNA. This is Small ribosomal subunit protein uS17 from Haloquadratum walsbyi (strain DSM 16790 / HBSQ001).